The primary structure comprises 1083 residues: Kinesin-like protein KIN-14R (1083 aa).

A coiled-coil region spans residues 264 to 418; sequence HDKYEKKIAE…NHIQETKGNI (155 aa). The Kinesin motor domain maps to 417-739; the sequence is NIRVFCRCRP…LNFATRVRGV (323 aa). Residue 500-507 participates in ATP binding; the sequence is GQTGTGKT. Coiled-coil stretches lie at residues 746–876 and 905–947; these read KQVD…SEGS and IKEL…MATT. The tract at residues 967–1083 is disordered; sequence EDNFGNENME…RDSKKKIWSR (117 aa). The span at 971–985 shows a compositional bias: polar residues; the sequence is GNENMESNTNILRTS. Over residues 1020 to 1032 the composition is skewed to basic and acidic residues; sequence PQMKEKRIRKSDP. Over residues 1044 to 1054 the composition is skewed to polar residues; that stretch reads RTASGSSSQVP. A compositionally biased stretch (basic and acidic residues) spans 1062–1083; the sequence is KREQQEVPVVKERDSKKKIWSR.

Belongs to the TRAFAC class myosin-kinesin ATPase superfamily. Kinesin family. KIN-14 subfamily.

In Arabidopsis thaliana (Mouse-ear cress), this protein is Kinesin-like protein KIN-14R.